The following is a 342-amino-acid chain: L-threonine 3-dehydrogenase (342 aa).

Residue Cys-38 participates in Zn(2+) binding. Active-site charge relay system residues include Thr-40 and His-43. Zn(2+) is bound by residues His-63, Glu-64, Cys-93, Cys-96, Cys-99, and Cys-107. NAD(+) is bound by residues Val-175, Asp-195, Arg-200, 262-264, and 286-287; these read LGI and IY.

Belongs to the zinc-containing alcohol dehydrogenase family. In terms of assembly, homotetramer. Zn(2+) is required as a cofactor.

It is found in the cytoplasm. The enzyme catalyses L-threonine + NAD(+) = (2S)-2-amino-3-oxobutanoate + NADH + H(+). It functions in the pathway amino-acid degradation; L-threonine degradation via oxydo-reductase pathway; glycine from L-threonine: step 1/2. Catalyzes the NAD(+)-dependent oxidation of L-threonine to 2-amino-3-ketobutyrate. The protein is L-threonine 3-dehydrogenase of Coxiella burnetii (strain Dugway 5J108-111).